The primary structure comprises 81 residues: Sec-independent protein translocase protein TatA (81 aa).

A helical transmembrane segment spans residues 1–21 (MGSLSLWHWIIVGAVLLLLFG). The disordered stretch occupies residues 41-81 (KKGLSEDDEKPEAARPAEPARSLDHQPVAEQPKVSETHRIG).

The protein belongs to the TatA/E family. In terms of assembly, the Tat system comprises two distinct complexes: a TatABC complex, containing multiple copies of TatA, TatB and TatC subunits, and a separate TatA complex, containing only TatA subunits. Substrates initially bind to the TatABC complex, which probably triggers association of the separate TatA complex to form the active translocon.

The protein resides in the cell inner membrane. Its function is as follows. Part of the twin-arginine translocation (Tat) system that transports large folded proteins containing a characteristic twin-arginine motif in their signal peptide across membranes. TatA could form the protein-conducting channel of the Tat system. This is Sec-independent protein translocase protein TatA from Beijerinckia indica subsp. indica (strain ATCC 9039 / DSM 1715 / NCIMB 8712).